Consider the following 330-residue polypeptide: Biotin synthase (330 aa).

A Radical SAM core domain is found at 55-282 (NAVQRSTLLS…TAYVRLSAGR (228 aa)). 3 residues coordinate [4Fe-4S] cluster: C70, C74, and C77. Residues C114, C145, C205, and R277 each contribute to the [2Fe-2S] cluster site.

It belongs to the radical SAM superfamily. Biotin synthase family. In terms of assembly, homodimer. [4Fe-4S] cluster is required as a cofactor. The cofactor is [2Fe-2S] cluster.

The catalysed reaction is (4R,5S)-dethiobiotin + (sulfur carrier)-SH + 2 reduced [2Fe-2S]-[ferredoxin] + 2 S-adenosyl-L-methionine = (sulfur carrier)-H + biotin + 2 5'-deoxyadenosine + 2 L-methionine + 2 oxidized [2Fe-2S]-[ferredoxin]. It functions in the pathway cofactor biosynthesis; biotin biosynthesis; biotin from 7,8-diaminononanoate: step 2/2. Functionally, catalyzes the conversion of dethiobiotin (DTB) to biotin by the insertion of a sulfur atom into dethiobiotin via a radical-based mechanism. The chain is Biotin synthase from Methylibium petroleiphilum (strain ATCC BAA-1232 / LMG 22953 / PM1).